A 230-amino-acid chain; its full sequence is Potassium/proton antiporter CemA (230 aa).

4 helical membrane-spanning segments follow: residues 7-27, 106-126, 145-165, and 181-201; these read LPSF…SFSF, IILH…SFFL, LNDS…VGFH, and LGWV…PVIL.

Belongs to the CemA family.

The protein localises to the plastid. It is found in the chloroplast inner membrane. The enzyme catalyses K(+)(in) + H(+)(out) = K(+)(out) + H(+)(in). Functionally, contributes to K(+)/H(+) antiport activity by supporting proton efflux to control proton extrusion and homeostasis in chloroplasts in a light-dependent manner to modulate photosynthesis. Prevents excessive induction of non-photochemical quenching (NPQ) under continuous-light conditions. Indirectly promotes efficient inorganic carbon uptake into chloroplasts. The protein is Potassium/proton antiporter CemA of Oryza nivara (Indian wild rice).